The primary structure comprises 522 residues: 2-isopropylmalate synthase (522 aa).

A Pyruvate carboxyltransferase domain is found at 5 to 267 (VIIFDTTLRD…ETGINAKEIH (263 aa)). The Mn(2+) site is built by D14, H202, H204, and N238. Residues 392–522 (QLQQLVVQSD…MHKNRELGGV (131 aa)) form a regulatory domain region.

The protein belongs to the alpha-IPM synthase/homocitrate synthase family. LeuA type 1 subfamily. Homodimer. Mn(2+) is required as a cofactor.

The protein localises to the cytoplasm. It carries out the reaction 3-methyl-2-oxobutanoate + acetyl-CoA + H2O = (2S)-2-isopropylmalate + CoA + H(+). The protein operates within amino-acid biosynthesis; L-leucine biosynthesis; L-leucine from 3-methyl-2-oxobutanoate: step 1/4. In terms of biological role, catalyzes the condensation of the acetyl group of acetyl-CoA with 3-methyl-2-oxobutanoate (2-ketoisovalerate) to form 3-carboxy-3-hydroxy-4-methylpentanoate (2-isopropylmalate). The sequence is that of 2-isopropylmalate synthase from Shewanella sp. (strain ANA-3).